Consider the following 492-residue polypeptide: Catalase-1 (492 aa).

Catalysis depends on residues H65 and N138. Residue Y348 coordinates heme.

The protein belongs to the catalase family. Homotetramer. Requires heme as cofactor.

The protein resides in the peroxisome. It is found in the glyoxysome. It carries out the reaction 2 H2O2 = O2 + 2 H2O. Functionally, occurs in almost all aerobically respiring organisms and serves to protect cells from the toxic effects of hydrogen peroxide. This chain is Catalase-1 (CAT1), found in Triticum aestivum (Wheat).